Here is an 83-residue protein sequence, read N- to C-terminus: Small ribosomal subunit protein bS16 (83 aa).

The protein belongs to the bacterial ribosomal protein bS16 family.

The protein is Small ribosomal subunit protein bS16 of Albidiferax ferrireducens (strain ATCC BAA-621 / DSM 15236 / T118) (Rhodoferax ferrireducens).